Here is a 469-residue protein sequence, read N- to C-terminus: Siroheme synthase (469 aa).

Positions 1–203 (MDYLPIFTDL…GQEQDAKQEL (203 aa)) are precorrin-2 dehydrogenase /sirohydrochlorin ferrochelatase. NAD(+) contacts are provided by residues 22–23 (DV) and 43–44 (PV). Ser128 carries the post-translational modification Phosphoserine. Residues 214–469 (GQVALIGSGP…LQQSAVVKLA (256 aa)) form a uroporphyrinogen-III C-methyltransferase region. Pro223 contributes to the S-adenosyl-L-methionine binding site. The Proton acceptor role is filled by Asp246. Catalysis depends on Lys268, which acts as the Proton donor. S-adenosyl-L-methionine contacts are provided by residues 299–301 (GGD), Val304, 329–330 (TA), Met381, and Gly410.

The protein in the N-terminal section; belongs to the precorrin-2 dehydrogenase / sirohydrochlorin ferrochelatase family. In the C-terminal section; belongs to the precorrin methyltransferase family.

It carries out the reaction uroporphyrinogen III + 2 S-adenosyl-L-methionine = precorrin-2 + 2 S-adenosyl-L-homocysteine + H(+). It catalyses the reaction precorrin-2 + NAD(+) = sirohydrochlorin + NADH + 2 H(+). The enzyme catalyses siroheme + 2 H(+) = sirohydrochlorin + Fe(2+). The protein operates within cofactor biosynthesis; adenosylcobalamin biosynthesis; precorrin-2 from uroporphyrinogen III: step 1/1. Its pathway is cofactor biosynthesis; adenosylcobalamin biosynthesis; sirohydrochlorin from precorrin-2: step 1/1. It participates in porphyrin-containing compound metabolism; siroheme biosynthesis; precorrin-2 from uroporphyrinogen III: step 1/1. It functions in the pathway porphyrin-containing compound metabolism; siroheme biosynthesis; siroheme from sirohydrochlorin: step 1/1. The protein operates within porphyrin-containing compound metabolism; siroheme biosynthesis; sirohydrochlorin from precorrin-2: step 1/1. Its function is as follows. Multifunctional enzyme that catalyzes the SAM-dependent methylations of uroporphyrinogen III at position C-2 and C-7 to form precorrin-2 via precorrin-1. Then it catalyzes the NAD-dependent ring dehydrogenation of precorrin-2 to yield sirohydrochlorin. Finally, it catalyzes the ferrochelation of sirohydrochlorin to yield siroheme. This Photobacterium profundum (strain SS9) protein is Siroheme synthase.